Consider the following 619-residue polypeptide: Pentatricopeptide repeat-containing protein At1g68980, mitochondrial (619 aa).

The transit peptide at 1–100 directs the protein to the mitochondrion; the sequence is MLRKTLTLIS…RAFVSTTYVI (100 aa). PPR repeat units follow at residues 186–221, 222–256, 257–292, 295–329, 366–400, 401–435, 436–466, 472–506, 507–541, and 542–576; these read DLVA…GVKP, DELS…GFAS, RRIL…GEAS, SEET…ESMS, GIGV…GLQL, DVET…RVAD, LKRC…VMED, KSHD…QYEP, NNQT…KAKL, and EHAL…KIFV.

The protein belongs to the PPR family. P subfamily.

The protein resides in the mitochondrion. This is Pentatricopeptide repeat-containing protein At1g68980, mitochondrial from Arabidopsis thaliana (Mouse-ear cress).